Reading from the N-terminus, the 232-residue chain is Ribose-5-phosphate isomerase A (232 aa).

Residues 29–32 (SGST), 86–89 (DGAD), and 99–102 (KGGG) contribute to the substrate site. Catalysis depends on E108, which acts as the Proton acceptor. K126 is a binding site for substrate.

It belongs to the ribose 5-phosphate isomerase family. As to quaternary structure, homodimer.

It carries out the reaction aldehydo-D-ribose 5-phosphate = D-ribulose 5-phosphate. Its pathway is carbohydrate degradation; pentose phosphate pathway; D-ribose 5-phosphate from D-ribulose 5-phosphate (non-oxidative stage): step 1/1. Its function is as follows. Catalyzes the reversible conversion of ribose-5-phosphate to ribulose 5-phosphate. In Synechococcus sp. (strain ATCC 27144 / PCC 6301 / SAUG 1402/1) (Anacystis nidulans), this protein is Ribose-5-phosphate isomerase A.